The primary structure comprises 116 residues: Movement protein TGB2 (116 aa).

Topologically, residues 1-11 are cytoplasmic; the sequence is MPLTPPPNPQK. A helical membrane pass occupies residues 12-32; that stretch reads TYQIAILALGLVLLAFVLISD. The Lumenal segment spans residues 33-77; that stretch reads HSPKVGDHLHNLPFGGEYKDGTKSIKYFQRPNQHSLSKTLAKSHN. A helical transmembrane segment spans residues 78 to 98; that stretch reads TTIFLLILGLIVTLHGLHYFN. Residues 99-116 are Cytoplasmic-facing; it reads NNRRVSSSLHCVLCQNKH.

It belongs to the Tymovirales TGBp2 protein family.

The protein resides in the host endoplasmic reticulum membrane. Its function is as follows. Plays a role in viral cell-to-cell propagation, by facilitating genome transport to neighboring plant cells through plasmosdesmata,. The sequence is that of Movement protein TGB2 from White clover mosaic virus (strain M) (WCMV).